We begin with the raw amino-acid sequence, 55 residues long: Putative virulence-regulating protein PA2146 (55 aa).

The segment at 1 to 55 (MAQHQGGKGNFAEDPKRASEAGKKGGQASGGNFKNDPQRASEAGKKGGQRSHGGN) is disordered. Basic and acidic residues-rich tracts occupy residues 11–23 (FAED…EAGK) and 36–45 (DPQRASEAGK).

Belongs to the con-10 family.

May be involved in the regulation of the production of pyocyanine, one of the major virulence factors secreted by P.aeruginosa, and other virulence factors. This Pseudomonas aeruginosa (strain ATCC 15692 / DSM 22644 / CIP 104116 / JCM 14847 / LMG 12228 / 1C / PRS 101 / PAO1) protein is Putative virulence-regulating protein PA2146.